The chain runs to 299 residues: Protease HtpX homolog (299 aa).

2 helical membrane passes run 15–35 and 39–59; these read ILLL…GYLF and GLGG…SMIF. Histidine 143 lines the Zn(2+) pocket. Glutamate 144 is an active-site residue. Residue histidine 147 coordinates Zn(2+). Helical transmembrane passes span 158 to 178 and 198 to 218; these read IAVA…RMMW and IIML…ATLV. Glutamate 227 contacts Zn(2+).

It belongs to the peptidase M48B family. Zn(2+) is required as a cofactor.

It is found in the cell membrane. In Streptococcus pneumoniae serotype 4 (strain ATCC BAA-334 / TIGR4), this protein is Protease HtpX homolog.